A 207-amino-acid polypeptide reads, in one-letter code: Claudin-11 (207 aa).

A topological domain (cytoplasmic) is located at residue Met1. Residues Val2–Ile22 traverse the membrane as a helical segment. Residues Val23–Arg82 lie on the Extracellular side of the membrane. Residues Ala83–Leu103 form a helical membrane-spanning segment. At Pro104–Leu122 the chain is on the cytoplasmic side. The chain crosses the membrane as a helical span at residues Ala123 to Val143. At Cys144–Ser157 the chain is on the extracellular side. Residues Leu158–Cys178 traverse the membrane as a helical segment. Topologically, residues Ser179–Val207 are cytoplasmic. Phosphoserine is present on residues Ser193, Ser194, Ser197, and Ser198.

Belongs to the claudin family. In terms of assembly, interacts with tetraspanin-3/TSPAN3. Interacts with OCLN.

The protein localises to the cell junction. Its subcellular location is the tight junction. It localises to the cell membrane. Its function is as follows. Plays a major role in tight junction-specific obliteration of the intercellular space, through calcium-independent cell-adhesion activity. The sequence is that of Claudin-11 (Cldn11) from Rattus norvegicus (Rat).